We begin with the raw amino-acid sequence, 418 residues long: NADH-quinone oxidoreductase subunit D (418 aa).

The protein belongs to the complex I 49 kDa subunit family. In terms of assembly, NDH-1 is composed of 14 different subunits. Subunits NuoB, C, D, E, F, and G constitute the peripheral sector of the complex.

Its subcellular location is the cell inner membrane. It carries out the reaction a quinone + NADH + 5 H(+)(in) = a quinol + NAD(+) + 4 H(+)(out). NDH-1 shuttles electrons from NADH, via FMN and iron-sulfur (Fe-S) centers, to quinones in the respiratory chain. The immediate electron acceptor for the enzyme in this species is believed to be ubiquinone. Couples the redox reaction to proton translocation (for every two electrons transferred, four hydrogen ions are translocated across the cytoplasmic membrane), and thus conserves the redox energy in a proton gradient. In Bordetella pertussis (strain Tohama I / ATCC BAA-589 / NCTC 13251), this protein is NADH-quinone oxidoreductase subunit D.